Consider the following 21-residue polypeptide: Dahlein-5.4 (21 aa).

Expressed by the skin dorsal glands.

The protein localises to the secreted. In terms of biological role, has no antimicrobial activity. Strongly inhibits the formation of NO by neuronal nitric oxide synthase at micromolar concentrations. The chain is Dahlein-5.4 from Ranoidea dahlii (Dahl's aquatic frog).